We begin with the raw amino-acid sequence, 384 residues long: Formate-dependent phosphoribosylglycinamide formyltransferase (384 aa).

N(1)-(5-phospho-beta-D-ribosyl)glycinamide contacts are provided by residues 14–15 (EL) and Glu74. ATP contacts are provided by residues Arg106, Lys147, 152-157 (SSGKGQ), 187-190 (EEFI), and Glu195. The 190-residue stretch at 111–300 (RLAAETLGLA…EFALHVRAIL (190 aa)) folds into the ATP-grasp domain. 2 residues coordinate Mg(2+): Glu259 and Glu271. N(1)-(5-phospho-beta-D-ribosyl)glycinamide contacts are provided by residues Asp278, Lys348, and 355 to 356 (RR).

This sequence belongs to the PurK/PurT family. Homodimer.

The catalysed reaction is N(1)-(5-phospho-beta-D-ribosyl)glycinamide + formate + ATP = N(2)-formyl-N(1)-(5-phospho-beta-D-ribosyl)glycinamide + ADP + phosphate + H(+). The protein operates within purine metabolism; IMP biosynthesis via de novo pathway; N(2)-formyl-N(1)-(5-phospho-D-ribosyl)glycinamide from N(1)-(5-phospho-D-ribosyl)glycinamide (formate route): step 1/1. Functionally, catalyzes two reactions: the first one is the production of beta-formyl glycinamide ribonucleotide (GAR) from formate, ATP and beta GAR; the second, a side reaction, is the production of acetyl phosphate and ADP from acetate and ATP. In terms of biological role, involved in the de novo purine biosynthesis. Catalyzes the transfer of formate to 5-phospho-ribosyl-glycinamide (GAR), producing 5-phospho-ribosyl-N-formylglycinamide (FGAR). Formate is provided by PurU via hydrolysis of 10-formyl-tetrahydrofolate. The sequence is that of Formate-dependent phosphoribosylglycinamide formyltransferase from Bacillus subtilis (strain 168).